Consider the following 379-residue polypeptide: Dual-specificity RNA methyltransferase RlmN (379 aa).

Glu-90 serves as the catalytic Proton acceptor. The Radical SAM core domain occupies 96–348; the sequence is EPSRGTLCVS…TTVRKTRGDD (253 aa). Cys-103 and Cys-353 are oxidised to a cystine. 3 residues coordinate [4Fe-4S] cluster: Cys-110, Cys-114, and Cys-117. S-adenosyl-L-methionine-binding positions include 179–180, Ser-211, 233–235, and Asn-310; these read GE and SLH. Cys-353 (S-methylcysteine intermediate) is an active-site residue.

This sequence belongs to the radical SAM superfamily. RlmN family. [4Fe-4S] cluster is required as a cofactor.

It localises to the cytoplasm. The enzyme catalyses adenosine(2503) in 23S rRNA + 2 reduced [2Fe-2S]-[ferredoxin] + 2 S-adenosyl-L-methionine = 2-methyladenosine(2503) in 23S rRNA + 5'-deoxyadenosine + L-methionine + 2 oxidized [2Fe-2S]-[ferredoxin] + S-adenosyl-L-homocysteine. It catalyses the reaction adenosine(37) in tRNA + 2 reduced [2Fe-2S]-[ferredoxin] + 2 S-adenosyl-L-methionine = 2-methyladenosine(37) in tRNA + 5'-deoxyadenosine + L-methionine + 2 oxidized [2Fe-2S]-[ferredoxin] + S-adenosyl-L-homocysteine. Specifically methylates position 2 of adenine 2503 in 23S rRNA and position 2 of adenine 37 in tRNAs. m2A2503 modification seems to play a crucial role in the proofreading step occurring at the peptidyl transferase center and thus would serve to optimize ribosomal fidelity. The polypeptide is Dual-specificity RNA methyltransferase RlmN (Nitrosomonas europaea (strain ATCC 19718 / CIP 103999 / KCTC 2705 / NBRC 14298)).